Reading from the N-terminus, the 393-residue chain is tRNA(Met) cytidine acetate ligase (393 aa).

Residues Gly81, Asn142, and Arg167 each contribute to the ATP site.

The protein belongs to the TmcAL family.

It localises to the cytoplasm. It catalyses the reaction cytidine(34) in elongator tRNA(Met) + acetate + ATP = N(4)-acetylcytidine(34) in elongator tRNA(Met) + AMP + diphosphate. In terms of biological role, catalyzes the formation of N(4)-acetylcytidine (ac(4)C) at the wobble position of elongator tRNA(Met), using acetate and ATP as substrates. First activates an acetate ion to form acetyladenylate (Ac-AMP) and then transfers the acetyl group to tRNA to form ac(4)C34. The polypeptide is tRNA(Met) cytidine acetate ligase (Bacillus cereus (strain AH820)).